A 426-amino-acid chain; its full sequence is Glutamate-1-semialdehyde 2,1-aminomutase (426 aa).

Residue Lys265 is modified to N6-(pyridoxal phosphate)lysine.

This sequence belongs to the class-III pyridoxal-phosphate-dependent aminotransferase family. HemL subfamily. Homodimer. Pyridoxal 5'-phosphate is required as a cofactor.

The protein localises to the cytoplasm. The enzyme catalyses (S)-4-amino-5-oxopentanoate = 5-aminolevulinate. It participates in porphyrin-containing compound metabolism; protoporphyrin-IX biosynthesis; 5-aminolevulinate from L-glutamyl-tRNA(Glu): step 2/2. The sequence is that of Glutamate-1-semialdehyde 2,1-aminomutase from Escherichia coli O81 (strain ED1a).